We begin with the raw amino-acid sequence, 3971 residues long: Mycosubtilin synthase subunit A (3971 aa).

The interval 160-479 (EPEADELAFI…ELEDIDLGRV (320 aa)) is acyl-CoA ligase. The Carrier 1 domain occupies 578 to 653 (TPIHEIETAL…DLAAFLVENH (76 aa)). Position 613 is an O-(pantetheine 4'-phosphoryl)serine (Ser-613). One can recognise a Ketosynthase family 3 (KS3) domain in the interval 669–1092 (SKDIAIIGMS…GTNAHVVLEE (424 aa)). Active-site for beta-ketoacyl synthase activity residues include Cys-843, His-974, and His-1014. One can recognise a Carrier 2 domain in the interval 1290-1365 (THIESFLKTV…SVVDYLAENV (76 aa)). Ser-1324 is modified (O-(pantetheine 4'-phosphoryl)serine). The tract at residues 1434–1456 (ESEISQDKTSLSPKSVTAKKNSA) is disordered. Residues 1440 to 1456 (DKTSLSPKSVTAKKNSA) are compositionally biased toward polar residues. The tract at residues 1529-1856 (IIAERSDGSR…SYFEQSQVPI (328 aa)) is GSA-AT. The residue at position 1759 (Lys-1759) is an N6-(pyridoxal phosphate)lysine. The interval 1921 to 1942 (GGFIPEGPDSPNDGGHKEPETY) is disordered. The condensation 1 stretch occupies residues 1938–2240 (EPETYELSPE…NMVPVKNTAS (303 aa)). The region spanning 2405–2480 (EPENETELQI…ELANFIRGEK (76 aa)) is the Carrier 3 domain. Ser-2440 carries the O-(pantetheine 4'-phosphoryl)serine modification. The segment at 2492 to 2781 (QKAFYRTSPA…QTMGIRTKPQ (290 aa)) is condensation 2. Positions 2937–3823 (PHNDTVCQWF…RNHPAGRKIF (887 aa)) are domain 1 (asparagine-activating). The adenylation 1 stretch occupies residues 2967-3364 (TYGQLNERVN…KVEAVQKAVV (398 aa)). The 76-residue stretch at 3442-3517 (PPGNEVESKL…QLANMALRME (76 aa)) folds into the Carrier 4 domain. Ser-3477 carries the O-(pantetheine 4'-phosphoryl)serine modification. The interval 3529–3818 (KISYYPVSSA…NTLVIRNHPA (290 aa)) is condensation 3.

Belongs to the ATP-dependent AMP-binding enzyme family. Pyridoxal 5'-phosphate is required as a cofactor. It depends on pantetheine 4'-phosphate as a cofactor.

This protein is a multifunctional enzyme, able to activate a long chain fatty acid and link it with the amino acid Asn as part of the synthesis of mycosubtilin. The activation sites consist of individual domains. The sequence is that of Mycosubtilin synthase subunit A (mycA) from Bacillus subtilis.